The following is a 223-amino-acid chain: Small ribosomal subunit protein uS3 (223 aa).

A KH type-2 domain is found at 39–115; that stretch reads IRKYIEKNLA…RVFINIVEIK (77 aa).

The protein belongs to the universal ribosomal protein uS3 family. Part of the 30S ribosomal subunit. Forms a tight complex with proteins S10 and S14.

Binds the lower part of the 30S subunit head. Binds mRNA in the 70S ribosome, positioning it for translation. The protein is Small ribosomal subunit protein uS3 of Leuconostoc citreum (strain KM20).